The chain runs to 138 residues: ATP synthase epsilon chain (138 aa).

Belongs to the ATPase epsilon chain family. In terms of assembly, F-type ATPases have 2 components, CF(1) - the catalytic core - and CF(0) - the membrane proton channel. CF(1) has five subunits: alpha(3), beta(3), gamma(1), delta(1), epsilon(1). CF(0) has three main subunits: a, b and c.

The protein resides in the cell membrane. In terms of biological role, produces ATP from ADP in the presence of a proton gradient across the membrane. In Streptococcus suis (strain 98HAH33), this protein is ATP synthase epsilon chain.